We begin with the raw amino-acid sequence, 649 residues long: Thioredoxin reductase 1, cytoplasmic (649 aa).

Methionine 1 bears the N-acetylmethionine mark. The interval 1–49 (MGCAEGKAVAAAAPTELQTKGKNGDGRRRSAKDHHPGKTLPENPAGFTS) is disordered. Residues 22 to 36 (KNGDGRRRSAKDHHP) show a composition bias toward basic and acidic residues. In terms of domain architecture, Glutaredoxin spans 56-156 (RALLQAYIDG…KLLKMNGPED (101 aa)). Residues 145-149 (LQKLL) are required for interaction with ESR1 and ESR2. FAD-binding positions include 172–173 (SG), 192–193 (DF), 208–209 (TC), and 213–217 (GCIPK). The cysteines at positions 209 and 214 are disulfide-linked. Lysine 218 carries the post-translational modification N6-succinyllysine. Position 281 is a phosphotyrosine (tyrosine 281). Residues 281-282 (YG) and threonine 311 each bind FAD. NADP(+) contacts are provided by residues arginine 316, 348-354 (ASYVALE), 371-372 (RS), arginine 376, 376-378 (RGF), 442-443 (GR), and lysine 465. Tyrosine 350 provides a ligand contact to FAD. FAD contacts are provided by residues aspartate 484, 491–493 (ELT), and histidine 622. Residue glutamate 491 participates in NADP(+) binding. Residue histidine 622 is the Proton acceptor of the active site. Residues 647-648 (CU) constitute a cross-link (cysteinyl-selenocysteine (Cys-Sec)). Position 648 (selenocysteine 648) is a non-standard amino acid, selenocysteine.

Belongs to the class-I pyridine nucleotide-disulfide oxidoreductase family. As to quaternary structure, homodimer. Interacts with HERC5. In terms of assembly, interacts with ESR1 and ESR2. Requires FAD as cofactor. Post-translationally, the N-terminus is blocked. ISGylated. As to expression, expressed predominantly in Leydig cells (at protein level). Also expressed in ovary, spleen, heart, liver, kidney and pancreas and in a number of cancer cell lines. In terms of tissue distribution, widely expressed with highest levels in kidney, testis, uterus, ovary, prostate, placenta and fetal liver.

The protein resides in the cytoplasm. Its subcellular location is the nucleus. It catalyses the reaction [thioredoxin]-dithiol + NADP(+) = [thioredoxin]-disulfide + NADPH + H(+). The enzyme catalyses H2O2 + NADPH + H(+) = NADP(+) + 2 H2O. Functionally, reduces disulfideprotein thioredoxin (Trx) to its dithiol-containing form. Homodimeric flavoprotein involved in the regulation of cellular redox reactions, growth and differentiation. Contains a selenocysteine residue at the C-terminal active site that is essential for catalysis. Also has reductase activity on hydrogen peroxide (H2O2). Its function is as follows. Induces actin and tubulin polymerization, leading to formation of cell membrane protrusions. In terms of biological role, enhances the transcriptional activity of estrogen receptors ESR1 and ESR2. Enhances the transcriptional activity of the estrogen receptor ESR2 only. Mediates cell death induced by a combination of interferon-beta and retinoic acid. This Homo sapiens (Human) protein is Thioredoxin reductase 1, cytoplasmic.